The primary structure comprises 321 residues: Anthranilate phosphoribosyltransferase (321 aa).

Residues Gly-72, 75–76, Thr-80, 82–85, 99–107, and Ser-111 contribute to the 5-phospho-alpha-D-ribose 1-diphosphate site; these read GD, NVST, and KHGNVSITS. An anthranilate-binding site is contributed by Gly-72. Ser-84 lines the Mg(2+) pocket. An anthranilate-binding site is contributed by Asn-102. Residue Arg-157 participates in anthranilate binding. Mg(2+)-binding residues include Asp-216 and Glu-217.

It belongs to the anthranilate phosphoribosyltransferase family. Homodimer. Mg(2+) is required as a cofactor.

It carries out the reaction N-(5-phospho-beta-D-ribosyl)anthranilate + diphosphate = 5-phospho-alpha-D-ribose 1-diphosphate + anthranilate. It functions in the pathway amino-acid biosynthesis; L-tryptophan biosynthesis; L-tryptophan from chorismate: step 2/5. In terms of biological role, catalyzes the transfer of the phosphoribosyl group of 5-phosphorylribose-1-pyrophosphate (PRPP) to anthranilate to yield N-(5'-phosphoribosyl)-anthranilate (PRA). This Methanococcus maripaludis (strain C7 / ATCC BAA-1331) protein is Anthranilate phosphoribosyltransferase.